The following is a 211-amino-acid chain: Thymidine kinase (211 aa).

Residues 9-16 and 87-90 each bind ATP; these read STMNAGKS and DEAQ. The active-site Proton acceptor is glutamate 88. Zn(2+)-binding residues include cysteine 145, cysteine 147, cysteine 182, and histidine 185.

It belongs to the thymidine kinase family. As to quaternary structure, homotetramer.

The protein localises to the cytoplasm. The catalysed reaction is thymidine + ATP = dTMP + ADP + H(+). In Rhodopirellula baltica (strain DSM 10527 / NCIMB 13988 / SH1), this protein is Thymidine kinase.